Here is a 623-residue protein sequence, read N- to C-terminus: UvrABC system protein C (623 aa).

A GIY-YIG domain is found at 27-105 (GSPGVYRMLD…IKQLKPRYNV (79 aa)). A UVR domain is found at 215 to 250 (TKVQANLAEQMQAASEAMEFERAAALRDRIKALTQV).

The protein belongs to the UvrC family. Interacts with UvrB in an incision complex.

The protein resides in the cytoplasm. Its function is as follows. The UvrABC repair system catalyzes the recognition and processing of DNA lesions. UvrC both incises the 5' and 3' sides of the lesion. The N-terminal half is responsible for the 3' incision and the C-terminal half is responsible for the 5' incision. The polypeptide is UvrABC system protein C (Cereibacter sphaeroides (strain ATCC 17023 / DSM 158 / JCM 6121 / CCUG 31486 / LMG 2827 / NBRC 12203 / NCIMB 8253 / ATH 2.4.1.) (Rhodobacter sphaeroides)).